Consider the following 1068-residue polypeptide: Protein AF-10 (1068 aa).

The segment at 22–74 (IGGCCVCSDERGWAENPLVYCDGHGCSVAVHQACYGIVQVPTGPWFCRKCESQ) adopts a PHD-type 1 zinc-finger fold. The C2HC pre-PHD-type zinc finger occupies 79 to 112 (RVRCELCPHKDGALKRTDNGGWAHVVCALYIPEV). Residues 80 to 287 (VRCELCPHKD…SLKRLEDTTA (208 aa)) form a self-association region. Positions 106-190 (ALYIPEVQFA…EGNGADNVQY (85 aa)) are required for interaction with histone H3. A PHD-type 2 zinc finger spans residues 135–198 (KTCYICDEQG…QYCGYCKYHF (64 aa)). The interaction with FSTL3 stretch occupies residues 141 to 233 (DEQGRESKAA…QDKHHEKEKK (93 aa)). Residues 206 to 260 (RGSNRSYDQSLSDSSSHSQDKHHEKEKKKYKEKDKHKQKHKKQPEPSPALVPSLT) are disordered. Residues 211–222 (SYDQSLSDSSSH) show a composition bias toward low complexity. At Ser217 the chain carries Phosphoserine. Positions 223-240 (SQDKHHEKEKKKYKEKDK) are enriched in basic and acidic residues. Ser252 carries the phosphoserine modification. Lys280 participates in a covalent cross-link: Glycyl lysine isopeptide (Lys-Gly) (interchain with G-Cter in SUMO2). The segment covering 291–305 (NANFQEVSAHTSSGK) has biased composition (polar residues). The segment at 291–505 (NANFQEVSAH…SSASPTSSVA (215 aa)) is disordered. The span at 306-317 (DVSETRGSEGKG) shows a compositional bias: basic and acidic residues. Residues 311–674 (RGSEGKGKKS…QDLGDNSRNL (364 aa)) form a DNA-binding region. The segment covering 352 to 372 (SFSGTPGSVKSSSGSSVQSPQ) has biased composition (low complexity). 2 stretches are compositionally biased toward polar residues: residues 387-396 (YSHSQQSSAT) and 404-446 (SGSQ…SSLP). At Ser436 the chain carries Phosphoserine. The segment covering 465–483 (EKKRKGNKQSKHGPGRPKG) has biased composition (basic residues). Residues 490–505 (VSHLSVSSASPTSSVA) are compositionally biased toward low complexity. Ser532 is modified (phosphoserine). Over residues 583–594 (SGSGSSTPVSSS) the composition is skewed to low complexity. Disordered regions lie at residues 583–612 (SGSG…ALSP) and 660–708 (NNQT…SLEN). 2 stretches are compositionally biased toward polar residues: residues 595–604 (HLPQQSSGHL) and 660–673 (NNQT…NSRN). Residues 674 to 694 (LVGRGSSPRGSLSPRSPVSSL) are compositionally biased toward low complexity. Ser684, Ser686, and Ser689 each carry phosphoserine. A transactivation domain; required for DOT1L-binding region spans residues 703–784 (NSSLENLPPV…NAQLSVPFPT (82 aa)). Residues 750–778 (LQVENRRLEEQIKNLTAKKERLQLLNAQL) form a leucine-zipper region. A compositionally biased stretch (polar residues) spans 800–814 (AQTAPTTDSLNSSKS). A disordered region spans residues 800 to 865 (AQTAPTTDSL…SPAQQGSGVS (66 aa)). 2 stretches are compositionally biased toward low complexity: residues 834–848 (LTSS…SALS) and 855–865 (QSPAQQGSGVS).

In terms of assembly, self-associates. Interacts with FSTL3 isoform 2; the interaction enhances MLLT10 in vitro transcriptional activity and self-association. Interacts with YEATS4. Interacts with SS18. Interacts with DOT1L; this interaction also occurs with the KMT2A/MLL1 fusion protein. Interacts with histone H3; interaction is necessary for MLLT10 binding to nucleosomes; interaction is inhibited by histone H3 'Lys-27' methylations (H3K27me1, H3K27me2 and H3K27me3) amd acetylation; interaction stabilizes association of MLLT10 at chromatin; interaction is essential for histone H3 'Lys-79' dimethylation (H3K79me2). As to expression, expressed abundantly in testis.

Its subcellular location is the nucleus. Its function is as follows. Probably involved in transcriptional regulation. In vitro or as fusion protein with KMT2A/MLL1 has transactivation activity. Binds to cruciform DNA. In cells, binding to unmodified histone H3 regulates DOT1L functions including histone H3 'Lys-79' dimethylation (H3K79me2) and gene activation. The polypeptide is Protein AF-10 (Homo sapiens (Human)).